The primary structure comprises 272 residues: Formamidopyrimidine-DNA glycosylase (272 aa).

The active-site Schiff-base intermediate with DNA is the Pro-2. The Proton donor role is filled by Glu-3. Lys-58 serves as the catalytic Proton donor; for beta-elimination activity. His-92, Arg-111, and Arg-153 together coordinate DNA. Residues 238–272 (NVYGRGGEPCPVCAKPLTEKPLSQRTTVYCTHCQN) form an FPG-type zinc finger. Catalysis depends on Arg-262, which acts as the Proton donor; for delta-elimination activity.

It belongs to the FPG family. In terms of assembly, monomer. The cofactor is Zn(2+).

It carries out the reaction Hydrolysis of DNA containing ring-opened 7-methylguanine residues, releasing 2,6-diamino-4-hydroxy-5-(N-methyl)formamidopyrimidine.. It catalyses the reaction 2'-deoxyribonucleotide-(2'-deoxyribose 5'-phosphate)-2'-deoxyribonucleotide-DNA = a 3'-end 2'-deoxyribonucleotide-(2,3-dehydro-2,3-deoxyribose 5'-phosphate)-DNA + a 5'-end 5'-phospho-2'-deoxyribonucleoside-DNA + H(+). Its function is as follows. Involved in base excision repair of DNA damaged by oxidation or by mutagenic agents. Acts as a DNA glycosylase that recognizes and removes damaged bases. Has a preference for oxidized purines, such as 7,8-dihydro-8-oxoguanine (8-oxoG). Has AP (apurinic/apyrimidinic) lyase activity and introduces nicks in the DNA strand. Cleaves the DNA backbone by beta-delta elimination to generate a single-strand break at the site of the removed base with both 3'- and 5'-phosphates. The chain is Formamidopyrimidine-DNA glycosylase from Teredinibacter turnerae (strain ATCC 39867 / T7901).